The primary structure comprises 779 residues: Protocadherin beta-8 (779 aa).

A signal peptide spans 1 to 28 (METALTKTPEKRQVIFLAILLLLWEASS). Topologically, residues 29-690 (EAISYSMPEE…QEEDMLTLYL (662 aa)) are extracellular. Cadherin domains lie at 75-133 (LQLD…FPEF), 134-242 (PDTE…APQF), 243-346 (LQSL…APKL), 347-450 (TISS…APAF), and 451-560 (TQTS…APFV). An intrachain disulfide couples Cys-96 to Cys-102. Asn-169 carries N-linked (GlcNAc...) asparagine glycosylation. O-linked (Man) serine glycosylation occurs at Ser-223. Residues Thr-225 and Thr-227 are each glycosylated (O-linked (Man) threonine). Asn-417 carries N-linked (GlcNAc...) asparagine glycosylation. N-linked (GlcNAc...) asparagine glycosylation occurs at Asn-566. The 101-residue stretch at 575-675 (LPRAAEPGYL…SQPYLPLPEV (101 aa)) folds into the Cadherin 6 domain. A helical membrane pass occupies residues 691–711 (VIALASVSSLFLLSVLLFVGV). Topologically, residues 712 to 779 (KLCKKAREAS…IIPSSLLQDS (68 aa)) are cytoplasmic.

Forms homodimers in trans (molecules expressed by two different cells). Forms promiscuous heterodimers in cis (at the plasma membrane of the same cell) with other protocadherins.

It localises to the cell membrane. Its function is as follows. Calcium-dependent cell-adhesion protein involved in cells self-recognition and non-self discrimination. Thereby, it is involved in the establishment and maintenance of specific neuronal connections in the brain. In Mus musculus (Mouse), this protein is Protocadherin beta-8.